The chain runs to 201 residues: Large ribosomal subunit protein uL4 (201 aa).

A disordered region spans residues 42-67 (GNSAQKTRSEVSGGGKKPWNQKGTGR).

The protein belongs to the universal ribosomal protein uL4 family. As to quaternary structure, part of the 50S ribosomal subunit.

One of the primary rRNA binding proteins, this protein initially binds near the 5'-end of the 23S rRNA. It is important during the early stages of 50S assembly. It makes multiple contacts with different domains of the 23S rRNA in the assembled 50S subunit and ribosome. Its function is as follows. Forms part of the polypeptide exit tunnel. This Legionella pneumophila (strain Corby) protein is Large ribosomal subunit protein uL4.